Here is a 438-residue protein sequence, read N- to C-terminus: Flotillin-2 (438 aa).

The protein belongs to the band 7/mec-2 family. Flotillin subfamily. In terms of assembly, heterooligomeric complex of flotillins 1 and 2.

The protein resides in the membrane. Its function is as follows. May play a role in axon growth and regeneration. May be involved in epidermal cell adhesion and epidermal structure and function. This is Flotillin-2 from Drosophila melanogaster (Fruit fly).